Consider the following 407-residue polypeptide: MSRYHTFTAADAVEYARQFGQVADPQALVTADEIGDGNLNLVFKIRDTAGISRVIVKQALPYVRCVGESWPLTLDRARIEAETLLTHSQFCPQHTVKVLHHDAELAVMVQEDLSDHHIWRHELIQGNYYPQAAEQLGEYLAQTLFHTSDFYQSAQAKKAAVSRYTNPELCQITEDLFFTDPYIEHERNNFDPVLLPEVLSLRQDKALKLAVASLKHRFLSQAEALLHGDIHSGSIFVADGRLKTIDAEFGFYGPIGFDIGTALGNLLLNYCGLPGLAGPRDAAAGREQRLNDVQTVWQTFAARFLALSQEKAQDPALATEGYAAQFLQHVWRDAIGYCGSELIRRTIGLAHVADLDSIDDQEMRRACQRHALSLGRALILVAPHVDDVGGVVARIRQSPSSLTPQRC.

ATP contacts are provided by residues N40, K57, and 111 to 113 (EDL). D229 is a binding site for substrate. 246–248 (DAE) is a binding site for ATP. R344 contributes to the substrate binding site.

This sequence belongs to the methylthioribose kinase family. Homodimer.

It catalyses the reaction 5-(methylsulfanyl)-D-ribose + ATP = 5-(methylsulfanyl)-alpha-D-ribose 1-phosphate + ADP + H(+). The protein operates within amino-acid biosynthesis; L-methionine biosynthesis via salvage pathway; S-methyl-5-thio-alpha-D-ribose 1-phosphate from S-methyl-5'-thioadenosine (hydrolase route): step 2/2. Functionally, catalyzes the phosphorylation of methylthioribose into methylthioribose-1-phosphate. The sequence is that of Methylthioribose kinase from Yersinia pseudotuberculosis serotype O:3 (strain YPIII).